The chain runs to 425 residues: Ribosome biogenesis protein WDR12 homolog (425 aa).

Residues 7 to 93 (IQAKFFTKDE…ETIVHLEYLE (87 aa)) are ubiquitin-like (UBL) domain. 7 WD repeats span residues 105–142 (IHDDWVSAVHASEAGILSGCYDNTLHIWDTATGTRRLT), 145–187 (GHLG…NAVE), 194–233 (GHARSVDCVDVSWNGAKFVTGSFDHMLKVWSADPDSTDTD), 265–303 (GHHEAVTGVQWTDEGEVATCSMDHTLRIWDVELGGMKSQ), 305–344 (AGSKAFLGISYSRLNRQIVSASSDRHVRLWDPRTKDGTIV), 350–390 (SHAG…APLY), and 394–425 (GHEDKVLAVDWSLGKYMISGGADNQLKIFEHK). Residues 227–253 (PDSTDTDHGQDGSEEGSRKKQKTVDGK) are disordered. Residues 231–253 (DTDHGQDGSEEGSRKKQKTVDGK) show a composition bias toward basic and acidic residues.

The protein belongs to the WD repeat WDR12/YTM1 family.

It is found in the nucleus. The protein localises to the nucleolus. Its subcellular location is the nucleoplasm. In terms of biological role, required for maturation of ribosomal RNAs and formation of the large ribosomal subunit. The polypeptide is Ribosome biogenesis protein WDR12 homolog (Ixodes scapularis (Black-legged tick)).